The sequence spans 90 residues: MGQIQYSEKYFDDTYEYRHVVLPPEVAKLLPKNRLLSENEWRAIGVQQSRGWVHYAIHRPEPHIMLFRRPLNFQQQQEAAAAAAAQMLPK.

Belongs to the CKS family.

In terms of biological role, binds to the catalytic subunit of the cyclin dependent kinases and is essential for their biological function. This is Cyclin-dependent kinases regulatory subunit 1 (CKS1) from Oryza sativa subsp. indica (Rice).